The chain runs to 548 residues: Membrane protein insertase YidC (548 aa).

A helical transmembrane segment spans residues 6-26 (NLLVIALLFVSFMIWQAWEQD). The disordered stretch occupies residues 28–55 (NPQPQAQQTTQTTTTAAGSAADQGVPAS). A compositionally biased stretch (low complexity) spans 30–50 (QPQAQQTTQTTTTAAGSAADQ). 4 consecutive transmembrane segments (helical) span residues 350–370 (FVGN…GIMY), 420–440 (LGGC…YYML), 458–478 (LSAQ…MFFI), and 499–519 (PVIF…YYIV).

The protein belongs to the OXA1/ALB3/YidC family. Type 1 subfamily. In terms of assembly, interacts with the Sec translocase complex via SecD. Specifically interacts with transmembrane segments of nascent integral membrane proteins during membrane integration.

The protein resides in the cell inner membrane. Required for the insertion and/or proper folding and/or complex formation of integral membrane proteins into the membrane. Involved in integration of membrane proteins that insert both dependently and independently of the Sec translocase complex, as well as at least some lipoproteins. Aids folding of multispanning membrane proteins. The polypeptide is Membrane protein insertase YidC (Shigella flexneri).